A 554-amino-acid chain; its full sequence is Tetratricopeptide repeat protein 34 (554 aa).

8 TPR repeats span residues Glu-38 to Ala-71, Ser-166 to Asn-199, Val-200 to Thr-233, Pro-294 to Ser-327, Glu-328 to Asp-361, Asn-411 to Asp-445, Ser-452 to Gln-485, and Ala-500 to His-533.

The polypeptide is Tetratricopeptide repeat protein 34 (Ttc34) (Mus musculus (Mouse)).